A 173-amino-acid polypeptide reads, in one-letter code: MVDSYDDSLDGEKSKTQVKRELHALVDLGERLTTLKADVLAKLPLTDALRKALAEAPKHTANIARKRHILFIGKLMRDQDQEAILVLLDQLDASTRQYNERFHNLERWRDRLIAGDDADLEKFVIEYPDADRQQLRSLIRQAQHEVARNKPPATSRKIFKYIRELDELQRGLR.

The protein belongs to the DarP family.

It localises to the cytoplasm. Its function is as follows. Member of a network of 50S ribosomal subunit biogenesis factors which assembles along the 30S-50S interface, preventing incorrect 23S rRNA structures from forming. Promotes peptidyl transferase center (PTC) maturation. In Pseudomonas syringae pv. tomato (strain ATCC BAA-871 / DC3000), this protein is Dual-action ribosomal maturation protein DarP.